The primary structure comprises 96 residues: Large ribosomal subunit protein eL30 (96 aa).

Belongs to the eukaryotic ribosomal protein eL30 family.

In Methanosphaerula palustris (strain ATCC BAA-1556 / DSM 19958 / E1-9c), this protein is Large ribosomal subunit protein eL30.